A 574-amino-acid chain; its full sequence is Myo-inositol transporter FST1 (574 aa).

Over 1–76 (MGKSRQNSTT…VQFANPKHFT (76 aa)) the chain is Cytoplasmic. Residues 77 to 97 (WLLVAFASMGGLLSGLDQSLI) form a helical membrane-spanning segment. Over 98–115 (SGANLFLPDDLGLTEHEN) the chain is Extracellular. The chain crosses the membrane as a helical span at residues 116-136 (SLVNSGMPLGAVGGALLLSPA). Residues 137–143 (NEYFGRK) are Cytoplasmic-facing. A helical transmembrane segment spans residues 144–164 (GAIIISIILYTIGAALEAGSI). Residues 165–173 (NFGMIVSSR) lie on the Extracellular side of the membrane. Residues 174-194 (VILGLGVGLEGGTVPVYVAET) form a helical membrane-spanning segment. Residues 195-205 (VERRIRGNLVS) lie on the Cytoplasmic side of the membrane. A helical membrane pass occupies residues 206 to 226 (LYQFNIALGEVLGYAVGAIFL). Over 227 to 233 (NVPGNWR) the chain is Extracellular. The helical transmembrane segment at 234–254 (YILGSSLLFSTIMFFGMLFLP) threads the bilayer. Over 255–330 (ESPRFLIHQK…RARRALVYAN (76 aa)) the chain is Cytoplasmic. A helical membrane pass occupies residues 331-351 (IMILLGQLTGVNAIMYYMSVL). At 352–363 (MNQIGFDKKESN) the chain is on the extracellular side. Residues 364–384 (YMSLVGGGSLLLGTIPAIFLM) form a helical membrane-spanning segment. The Cytoplasmic portion of the chain corresponds to 385-390 (ERFGRR). A helical transmembrane segment spans residues 391 to 411 (FWAITMLPGFFIGLVLIGVSY). Residues 412–426 (QFDVETQLQTVEGLY) are Extracellular-facing. The chain crosses the membrane as a helical span at residues 427–447 (LSGLIIYMGFFGSYACLTWVV). At 448 to 465 (PSEVYPTYLRSYGMTTSD) the chain is on the cytoplasmic side. The chain crosses the membrane as a helical span at residues 466-486 (ALLFLASFIVTYNFTAMQNAM). Topologically, residues 487 to 490 (GKTG) are extracellular. The helical transmembrane segment at 491–511 (LALGFYGGIAFIGEIYQIFFM) threads the bilayer. At 512 to 574 (PETKNKTLEE…PKDQVQVSHA (63 aa)) the chain is on the cytoplasmic side.

It belongs to the major facilitator superfamily. Sugar transporter (TC 2.A.1.1) family.

It localises to the cell membrane. It catalyses the reaction myo-inositol(out) + H(+)(out) = myo-inositol(in) + H(+)(in). Functionally, transporter for myo-inositol. Also appears to transport the polyketide mycotoxin fumonisin B1 (FB1). Does not appear to transport hexose sugars. This Gibberella moniliformis (strain M3125 / FGSC 7600) (Maize ear and stalk rot fungus) protein is Myo-inositol transporter FST1.